Consider the following 354-residue polypeptide: Divinyl chlorophyll a/b light-harvesting protein PcbG (354 aa).

Transmembrane regions (helical) follow at residues 27 to 47 (FIAAHAGHTGLISFAAGASTL), 65 to 85 (IFLAHLASIGIGFDDAGVWTG), 88 to 108 (VASVAIVHIIASLVYAGGALS), 201 to 221 (VLGGHAFLAFVEITGGAFHIA), 241 to 261 (AVLSFSLAGIGWMAIVAAFWC), and 308 to 328 (LTNVHYYFGFFFLQGHLWHAI).

It belongs to the PsbB/PsbC family. IsiA/Pcb subfamily. As to quaternary structure, the antenna complex consists of divinyl chlorophylls (a and b) and divinyl chlorophyll a/b binding proteins and binds more divinyl chlorophyll b than does the antenna complex from high-light-adapted Prochlorococcus. Requires divinyl chlorophyll a as cofactor. Divinyl chlorophyll b is required as a cofactor.

The protein localises to the cellular thylakoid membrane. Functionally, the antenna complex functions as a light receptor, it captures and delivers excitation energy to photosystems II and I. The Prochlorales pcb genes are not related to higher plant LHCs. The sequence is that of Divinyl chlorophyll a/b light-harvesting protein PcbG (pcbG) from Prochlorococcus marinus (strain NATL2A).